We begin with the raw amino-acid sequence, 331 residues long: UPF0194 membrane protein YbhG (331 aa).

Positions 1–15 (MKKPVVIGLAVVVLA) are cleaved as a signal peptide. The stretch at 107 to 208 (EEIAQAAAAV…LNLQDSTLIA (102 aa)) forms a coiled coil.

Belongs to the UPF0194 family.

It localises to the periplasm. The polypeptide is UPF0194 membrane protein YbhG (Escherichia coli O139:H28 (strain E24377A / ETEC)).